The chain runs to 295 residues: Acetylglutamate kinase (295 aa).

Substrate contacts are provided by residues 64–65 (GG), R86, and N190.

The protein belongs to the acetylglutamate kinase family. ArgB subfamily.

It is found in the cytoplasm. It carries out the reaction N-acetyl-L-glutamate + ATP = N-acetyl-L-glutamyl 5-phosphate + ADP. It participates in amino-acid biosynthesis; L-arginine biosynthesis; N(2)-acetyl-L-ornithine from L-glutamate: step 2/4. Functionally, catalyzes the ATP-dependent phosphorylation of N-acetyl-L-glutamate. In Pelotomaculum thermopropionicum (strain DSM 13744 / JCM 10971 / SI), this protein is Acetylglutamate kinase.